Reading from the N-terminus, the 532-residue chain is 2,3-bisphosphoglycerate-independent phosphoglycerate mutase (532 aa).

Residues D15 and S65 each contribute to the Mn(2+) site. The active-site Phosphoserine intermediate is S65. Substrate is bound by residues H126, 156–157 (RD), R188, R194, 258–261 (RPDR), and K331. The Mn(2+) site is built by D398, H402, D439, H440, and H457.

It belongs to the BPG-independent phosphoglycerate mutase family. Monomer. It depends on Mn(2+) as a cofactor.

It carries out the reaction (2R)-2-phosphoglycerate = (2R)-3-phosphoglycerate. Its pathway is carbohydrate degradation; glycolysis; pyruvate from D-glyceraldehyde 3-phosphate: step 3/5. Its function is as follows. Catalyzes the interconversion of 2-phosphoglycerate and 3-phosphoglycerate. This Rippkaea orientalis (strain PCC 8801 / RF-1) (Cyanothece sp. (strain PCC 8801)) protein is 2,3-bisphosphoglycerate-independent phosphoglycerate mutase.